The chain runs to 260 residues: Dehydrogenase/reductase SDR family member 4 (260 aa).

Position 18–42 (18–42) interacts with NADP(+); that stretch reads IVTASTDGIGLAIARRLAQDGAHVV. Lysine 74 is subject to N6-acetyllysine; alternate. Lysine 74 bears the N6-succinyllysine; alternate mark. Position 151 (serine 151) interacts with substrate. Catalysis depends on tyrosine 164, which acts as the Proton acceptor. Lysine 168 provides a ligand contact to NADP(+). N6-acetyllysine; alternate is present on lysine 198. Position 198 is an N6-succinyllysine; alternate (lysine 198). Serine 202 bears the Phosphoserine mark. At lysine 209 the chain carries N6-succinyllysine. A Peroxisomal targeting signal motif is present at residues 258-260; sequence SRL.

The protein belongs to the short-chain dehydrogenases/reductases (SDR) family. As to quaternary structure, homotetramer. In terms of tissue distribution, detected in liver and kidney. Detected at lower levels in heart, lung, spleen, small intestine, testis, brain and stomach.

Its subcellular location is the peroxisome. The catalysed reaction is a secondary alcohol + NADP(+) = a ketone + NADPH + H(+). It catalyses the reaction 3alpha-hydroxy-5beta-pregnan-20-one + NADP(+) = 5beta-pregnan-3,20-dione + NADPH + H(+). The enzyme catalyses 5beta-dihydrotestosterone + NADPH + H(+) = 5beta-androstane-3alpha,17beta-diol + NADP(+). It carries out the reaction all-trans-retinol + NADP(+) = all-trans-retinal + NADPH + H(+). The catalysed reaction is isatin + NADPH + H(+) = 3-hydroxyindolin-2-one + NADP(+). With respect to regulation, inhibited by flavonoids (kaempferol, quercetin, quercitrin, genistein), myristic acid, pyrazole, barbital, phenobarbital and CuSO4. NADPH-dependent oxidoreductase which catalyzes the reduction of a variety of compounds bearing carbonyl groups including ketosteroids, alpha-dicarbonyl compounds, aldehydes, aromatic ketones and quinones. Reduces all-trans-retinal and 9-cis retinal. Reduces 3-ketosteroids and benzil into 3alpha-hydroxysteroids and S-benzoin, respectively, in contrast to the stereoselectivity of primates DHRS4s which produce 3beta-hydroxysteroids and R-benzoin. In the reverse reaction, catalyze the NADP-dependent oxidation of 3alpha-hydroxysteroids and alcohol, but with much lower efficiency. Involved in the metabolism of 3alpha-hydroxysteroids, retinoid, isatin and xenobiotic carbonyl compounds. In Oryctolagus cuniculus (Rabbit), this protein is Dehydrogenase/reductase SDR family member 4 (DHRS4).